Consider the following 253-residue polypeptide: Complement C1q subcomponent subunit B (253 aa).

The N-terminal stretch at 1-27 is a signal peptide; that stretch reads MMMKIPWGSIPVLMLLLLLGLIDISQA. Q28 bears the Pyrrolidone carboxylic acid mark. P35, P38, P41, P53, and P56 each carry 4-hydroxyproline. Collagen-like domains are found at residues 37–86 and 60–114; these read IPGI…PGNP and GEKG…GESG. A disordered region spans residues 38–115; the sequence is PGIPGIPGTP…APGPKGESGD (78 aa). A 5-hydroxylysine mark is found at K59 and K62. P65 bears the 4-hydroxyproline mark. The segment covering 70-79 has biased composition (basic and acidic residues); that stretch reads DHGEFGEKGD. K77 carries the 5-hydroxylysine modification. A compositionally biased stretch (low complexity) spans 80 to 92; the sequence is PGIPGNPGKVGPK. Residues P83 and P86 each carry the 4-hydroxyproline modification. Residues K92 and K98 each carry the 5-hydroxylysine modification. The span at 96–105 shows a compositional bias: gly residues; it reads GPKGGPGAPG. 4-hydroxyproline occurs at positions 101, 104, and 107. At K110 the chain carries 5-hydroxylysine. Residues 117 to 253 enclose the C1q domain; sequence KATQKIAFSA…GFLLFPDMEA (137 aa). C181 and C198 are joined by a disulfide. Ca(2+) is bound by residues D199, Y200, and Q206.

In terms of assembly, core component of the complement C1 complex, a calcium-dependent complex composed of 1 molecule of the C1Q subcomplex, 2 molecules of C1R and 2 molecules of C1S. The C1Q subcomplex is composed 18 subunits: 3 chains of C1QA, C1QB, and C1QC trimerize to form 6 collagen-like triple helices connected to six globular ligand-recognition modules (C1q domain). Hydroxylated on lysine and proline residues. Hydroxylated lysine residues can be glycosylated. Human C1Q contains up to 68.3 hydroxylysine-galactosylglucose residues and up to 2.5 hydroxylysine-galactose per molecule. Total percentage hydroxylysine residues glycosylated is 86.4%.

It localises to the secreted. The protein resides in the cell surface. With respect to regulation, the C1Q subcomplex is inhibited by sulfated molecules, such as triterpenoid sulfates, heparan sulfate, or chondroitin sulfates. In terms of biological role, core component of the complement C1 complex, a multiprotein complex that initiates the classical pathway of the complement system, a cascade of proteins that leads to phagocytosis and breakdown of pathogens and signaling that strengthens the adaptive immune system. The classical complement pathway is initiated by the C1Q subcomplex of the C1 complex, which specifically binds IgG or IgM immunoglobulins complexed with antigens, forming antigen-antibody complexes on the surface of pathogens: C1QA, together with C1QB and C1QC, specifically recognizes and binds the Fc regions of IgG or IgM via its C1q domain. Immunoglobulin-binding activates the proenzyme C1R, which cleaves C1S, initiating the proteolytic cascade of the complement system. The C1Q subcomplex is activated by a hexamer of IgG complexed with antigens, while it is activated by a pentameric IgM. The C1Q subcomplex also recognizes and binds phosphatidylserine exposed on the surface of cells undergoing programmed cell death, possibly promoting activation of the complement system. This chain is Complement C1q subcomponent subunit B, found in Homo sapiens (Human).